The chain runs to 307 residues: Agmatinase (307 aa).

Mn(2+) is bound by residues His-128, Asp-151, His-153, Asp-155, Asp-232, and Asp-234.

The protein belongs to the arginase family. Agmatinase subfamily. It depends on Mn(2+) as a cofactor.

The catalysed reaction is agmatine + H2O = urea + putrescine. It functions in the pathway amine and polyamine biosynthesis; putrescine biosynthesis via agmatine pathway; putrescine from agmatine: step 1/1. Functionally, catalyzes the formation of putrescine from agmatine. The polypeptide is Agmatinase (Neisseria gonorrhoeae (strain ATCC 700825 / FA 1090)).